The primary structure comprises 257 residues: Hydroxyacylglutathione hydrolase (257 aa).

The Zn(2+) site is built by His54, His56, Asp58, His59, His113, Asp137, and His175.

The protein belongs to the metallo-beta-lactamase superfamily. Glyoxalase II family. In terms of assembly, monomer. Requires Zn(2+) as cofactor.

The catalysed reaction is an S-(2-hydroxyacyl)glutathione + H2O = a 2-hydroxy carboxylate + glutathione + H(+). Its pathway is secondary metabolite metabolism; methylglyoxal degradation; (R)-lactate from methylglyoxal: step 2/2. Its function is as follows. Thiolesterase that catalyzes the hydrolysis of S-D-lactoyl-glutathione to form glutathione and D-lactic acid. The chain is Hydroxyacylglutathione hydrolase from Acaryochloris marina (strain MBIC 11017).